A 245-amino-acid polypeptide reads, in one-letter code: 1-(5-phosphoribosyl)-5-[(5-phosphoribosylamino)methylideneamino] imidazole-4-carboxamide isomerase (245 aa).

Catalysis depends on D7, which acts as the Proton acceptor. Catalysis depends on D129, which acts as the Proton donor.

It belongs to the HisA/HisF family.

Its subcellular location is the cytoplasm. The enzyme catalyses 1-(5-phospho-beta-D-ribosyl)-5-[(5-phospho-beta-D-ribosylamino)methylideneamino]imidazole-4-carboxamide = 5-[(5-phospho-1-deoxy-D-ribulos-1-ylimino)methylamino]-1-(5-phospho-beta-D-ribosyl)imidazole-4-carboxamide. Its pathway is amino-acid biosynthesis; L-histidine biosynthesis; L-histidine from 5-phospho-alpha-D-ribose 1-diphosphate: step 4/9. This is 1-(5-phosphoribosyl)-5-[(5-phosphoribosylamino)methylideneamino] imidazole-4-carboxamide isomerase from Escherichia coli O6:K15:H31 (strain 536 / UPEC).